The chain runs to 329 residues: Aspartate--ammonia ligase (329 aa).

The protein belongs to the class-II aminoacyl-tRNA synthetase family. AsnA subfamily.

It is found in the cytoplasm. It catalyses the reaction L-aspartate + NH4(+) + ATP = L-asparagine + AMP + diphosphate + H(+). The protein operates within amino-acid biosynthesis; L-asparagine biosynthesis; L-asparagine from L-aspartate (ammonia route): step 1/1. In Ureaplasma urealyticum serovar 10 (strain ATCC 33699 / Western), this protein is Aspartate--ammonia ligase.